The following is a 293-amino-acid chain: Methylsterol monooxygenase 1 (293 aa).

2 helical membrane-spanning segments follow: residues 55–75 (LIVH…FQFI) and 100–120 (GILF…YYFT). Positions 144–274 (GCAVIEDTWH…FTWWDRIFGT (131 aa)) constitute a Fatty acid hydroxylase domain. Residues 157–161 (HRLLH) carry the Histidine box-1 motif. A Histidine box-2 motif is present at residues 170–174 (HKVHH). The helical transmembrane segment at 199 to 219 (FFIGIVLLCDHVILLWAWVTM) threads the bilayer. Positions 249–255 (HHDFHHM) match the Histidine box-3 motif.

Belongs to the sterol desaturase family. Requires Fe cation as cofactor. Ubiquitinated by MARCHF6, leading to proteasomal degradation.

The protein localises to the endoplasmic reticulum membrane. The enzyme catalyses 4,4-dimethyl-5alpha-cholest-7-en-3beta-ol + 6 Fe(II)-[cytochrome b5] + 3 O2 + 5 H(+) = 4alpha-carboxy-4beta-methyl-5alpha-cholest-7-ene-3beta-ol + 6 Fe(III)-[cytochrome b5] + 4 H2O. It carries out the reaction 4,4-dimethyl-5alpha-cholesta-8,24-dien-3beta-ol + 6 Fe(II)-[cytochrome b5] + 3 O2 + 5 H(+) = 4beta-methylzymosterol-4alpha-carboxylate + 6 Fe(III)-[cytochrome b5] + 4 H2O. The catalysed reaction is 4alpha-methylzymosterol + 6 Fe(II)-[cytochrome b5] + 3 O2 + 5 H(+) = 4alpha-carboxyzymosterol + 6 Fe(III)-[cytochrome b5] + 4 H2O. It catalyses the reaction 4alpha-methyl-5alpha-cholest-7-en-3beta-ol + 6 Fe(II)-[cytochrome b5] + 3 O2 + 5 H(+) = 4alpha-carboxy-5alpha-cholest-7-en-3beta-ol + 6 Fe(III)-[cytochrome b5] + 4 H2O. The enzyme catalyses 4,4-dimethyl-5alpha-cholest-8-en-3beta-ol + 6 Fe(II)-[cytochrome b5] + 3 O2 + 5 H(+) = 4alpha-carboxy-4beta-methyl-5alpha-cholest-8-en-3beta-ol + 6 Fe(III)-[cytochrome b5] + 4 H2O. It carries out the reaction 4alpha-methyl-5alpha-cholest-8-en-3beta-ol + 6 Fe(II)-[cytochrome b5] + 3 O2 + 5 H(+) = 4alpha-carboxy-5alpha-cholest-8-ene-3beta-ol + 6 Fe(III)-[cytochrome b5] + 4 H2O. Its pathway is steroid biosynthesis; zymosterol biosynthesis; zymosterol from lanosterol: step 3/6. It participates in steroid biosynthesis; cholesterol biosynthesis. Catalyzes the three-step monooxygenation required for the demethylation of 4,4-dimethyl and 4alpha-methylsterols, which can be subsequently metabolized to cholesterol. This chain is Methylsterol monooxygenase 1 (Msmo1), found in Rattus norvegicus (Rat).